The primary structure comprises 879 residues: Probable phospholipid transport protein YdbH (879 aa).

The Cytoplasmic segment spans residues methionine 1 to lysine 6. Residues alanine 7–tryptophan 29 form a helical membrane-spanning segment. Residues valine 30–glutamine 879 are Periplasmic-facing.

In terms of assembly, interacts with the outer membrane lipoprotein YnbE.

The protein resides in the cell inner membrane. Functionally, involved in outer membrane lipid homeostasis. Interacts with the outer membrane lipoprotein YnbE to form a functional protein bridge connecting the inner and outer membranes of the cell. Likely transports phospholipids between the inner membrane and the outer membrane. It would provide a bridge-like structure that protects phospholipids as they travel across the periplasm. TamB, YdbH and YhdP are redundant, but not equivalent, in performing an essential function for growth and maintaining lipid homeostasis in the outer membrane. Any of these three proteins is sufficient for growth. This chain is Probable phospholipid transport protein YdbH (ydbH), found in Escherichia coli (strain K12).